A 173-amino-acid chain; its full sequence is Glycine cleavage system H protein, mitochondrial (173 aa).

Residues 1-48 (MALRAVRSVRAAVGGLRAISAPSAPCLPRPWGLRAGAVRELRTGPALL) constitute a mitochondrion transit peptide. A Lipoyl-binding domain is found at 66–148 (VGTVGISNFA…YEDGWLIKMT (83 aa)). At Lys-107 the chain carries N6-lipoyllysine.

It belongs to the GcvH family. In terms of assembly, interacts with GLDC. The glycine cleavage system is composed of four proteins: P (GLDC), T (GCST), L (DLD) and H (GCSH). (R)-lipoate serves as cofactor.

Its subcellular location is the mitochondrion. Its function is as follows. The glycine cleavage system catalyzes the degradation of glycine. The H protein (GCSH) shuttles the methylamine group of glycine from the P protein (GLDC) to the T protein (GCST). Has a pivotal role in the lipoylation of enzymes involved in cellular energetics such as the mitochondrial dihydrolipoyllysine-residue acetyltransferase component of pyruvate dehydrogenase complex (DLAT), and the mitochondrial dihydrolipoyllysine-residue succinyltransferase component of 2-oxoglutarate dehydrogenase complex (DLST). This chain is Glycine cleavage system H protein, mitochondrial, found in Bos taurus (Bovine).